The following is a 478-amino-acid chain: Spindle defective protein 3 (478 aa).

At 1 to 24 (MDQMTVEEKILEHQELEDGSSSFR) the chain is on the cytoplasmic side. A helical transmembrane segment spans residues 25–45 (WLVSSTVIAIGGATVALYISG). Over 46-52 (KIDWKIP) the chain is Extracellular. The chain crosses the membrane as a helical span at residues 53 to 73 (AIEAGLALTAGGTITCGYLWF). Residues 74–478 (KKRVKTVRKL…LRRVDDDIIE (405 aa)) are Cytoplasmic-facing.

It localises to the mitochondrion. Its subcellular location is the mitochondrion outer membrane. In the first mitotic division in embryos, required for mitotic spindle alignment and asymmetric cell division. Required for motor-driven chromosome movement and homolog searching within the nucleus, and subsequently ensures homologous chromosome pairing during the prophase stage of meiosis. The sequence is that of Spindle defective protein 3 from Caenorhabditis elegans.